We begin with the raw amino-acid sequence, 125 residues long: uncharacterized protein (125 aa).

This is an uncharacterized protein from Escherichia coli (Bacteriophage T4).